The chain runs to 592 residues: A-type ATP synthase subunit A (592 aa).

An ATP-binding site is contributed by G233–T240.

The protein belongs to the ATPase alpha/beta chains family. As to quaternary structure, has multiple subunits with at least A(3), B(3), C, D, E, F, H, I and proteolipid K(x).

Its subcellular location is the cell membrane. It carries out the reaction ATP + H2O + 4 H(+)(in) = ADP + phosphate + 5 H(+)(out). Functionally, component of the A-type ATP synthase that produces ATP from ADP in the presence of a proton gradient across the membrane. The A chain is the catalytic subunit. The polypeptide is A-type ATP synthase subunit A (Saccharolobus islandicus (strain Y.G.57.14 / Yellowstone #1) (Sulfolobus islandicus)).